We begin with the raw amino-acid sequence, 421 residues long: Alpha-1-antiproteinase 2 (421 aa).

Positions 1–24 are cleaved as a signal peptide; it reads MPSSVPWCLLLLAGLCCLVPSSLA. N-linked (GlcNAc...) asparagine glycans are attached at residues Asn73, Asn110, and Asn274. Positions 376–395 are RCL; sequence GTTMWEIMPISLPPDLKFNR.

It belongs to the serpin family. N-glycosylated with carbohydrates having biantennary side chains. Plasma.

Its subcellular location is the secreted. Its function is as follows. Inhibitor of serine proteases. The sequence is that of Alpha-1-antiproteinase 2 from Equus caballus (Horse).